Consider the following 362-residue polypeptide: Molybdenum import ATP-binding protein ModC (362 aa).

Residues 1–236 enclose the ABC transporter domain; that stretch reads MTASGLYLNL…TQSPTAQGED (236 aa). 36-43 provides a ligand contact to ATP; that stretch reads GPSGSGKT. Residues 297–362 form the Mop domain; that stretch reads DSTILNKLAA…AQVKSVAIVG (66 aa).

Belongs to the ABC transporter superfamily. Molybdate importer (TC 3.A.1.8) family. The complex is composed of two ATP-binding proteins (ModC), two transmembrane proteins (ModB) and a solute-binding protein (ModA).

The protein resides in the cell inner membrane. It catalyses the reaction molybdate(out) + ATP + H2O = molybdate(in) + ADP + phosphate + H(+). Its function is as follows. Part of the ABC transporter complex ModABC involved in molybdenum import. Responsible for energy coupling to the transport system. This is Molybdenum import ATP-binding protein ModC from Saccharophagus degradans (strain 2-40 / ATCC 43961 / DSM 17024).